We begin with the raw amino-acid sequence, 129 residues long: Small ribosomal subunit protein uS11 (129 aa).

It belongs to the universal ribosomal protein uS11 family. As to quaternary structure, part of the 30S ribosomal subunit. Interacts with proteins S7 and S18. Binds to IF-3.

In terms of biological role, located on the platform of the 30S subunit, it bridges several disparate RNA helices of the 16S rRNA. Forms part of the Shine-Dalgarno cleft in the 70S ribosome. This is Small ribosomal subunit protein uS11 from Bacillus anthracis (strain A0248).